The primary structure comprises 240 residues: Large ribosomal subunit protein uL2 (240 aa).

Over residues 1–10 (MGHRISTQSR) the composition is skewed to polar residues. 2 disordered regions span residues 1–20 (MGHR…YRAP) and 204–240 (FGGG…GYRR).

The protein belongs to the universal ribosomal protein uL2 family. In terms of assembly, part of the 50S ribosomal subunit. Forms a bridge to the 30S subunit in the 70S ribosome.

One of the primary rRNA binding proteins. Required for association of the 30S and 50S subunits to form the 70S ribosome, for tRNA binding and peptide bond formation. It has been suggested to have peptidyltransferase activity; this is somewhat controversial. Makes several contacts with the 16S rRNA in the 70S ribosome. The chain is Large ribosomal subunit protein uL2 from Methanocorpusculum labreanum (strain ATCC 43576 / DSM 4855 / Z).